A 127-amino-acid polypeptide reads, in one-letter code: Small ribosomal subunit protein uS11 (127 aa).

This sequence belongs to the universal ribosomal protein uS11 family. As to quaternary structure, part of the 30S ribosomal subunit. Interacts with proteins S7 and S18. Binds to IF-3.

Its function is as follows. Located on the platform of the 30S subunit, it bridges several disparate RNA helices of the 16S rRNA. Forms part of the Shine-Dalgarno cleft in the 70S ribosome. This is Small ribosomal subunit protein uS11 from Prosthecochloris aestuarii (strain DSM 271 / SK 413).